Consider the following 409-residue polypeptide: Peptidase T (409 aa).

Histidine 78 contacts Zn(2+). Aspartate 80 is an active-site residue. Residue aspartate 139 coordinates Zn(2+). Residue glutamate 173 is the Proton acceptor of the active site. Zn(2+)-binding residues include glutamate 174, aspartate 196, and histidine 378.

This sequence belongs to the peptidase M20B family. The cofactor is Zn(2+).

It is found in the cytoplasm. The enzyme catalyses Release of the N-terminal residue from a tripeptide.. In terms of biological role, cleaves the N-terminal amino acid of tripeptides. The sequence is that of Peptidase T from Shewanella sediminis (strain HAW-EB3).